We begin with the raw amino-acid sequence, 190 residues long: Putative 3-methyladenine DNA glycosylase (190 aa).

The protein belongs to the DNA glycosylase MPG family.

The polypeptide is Putative 3-methyladenine DNA glycosylase (Corynebacterium efficiens (strain DSM 44549 / YS-314 / AJ 12310 / JCM 11189 / NBRC 100395)).